The chain runs to 206 residues: Glycerol-3-phosphate acyltransferase (206 aa).

Transmembrane regions (helical) follow at residues 4–24 (IIGILILGYLLGSIPFALLVG), 55–75 (IIVLIGDLGKGAVASLVPILL), 78–98 (ELHPLFAGLAAVVGHIYPVFA), 112–132 (MLLVTSPILFLVLLISFLTTL), 137–157 (MVSLSSIVSASIGIVAAITIG), and 158–178 (IVEQDWIVPTFFTILALFVIF).

Belongs to the PlsY family. As to quaternary structure, probably interacts with PlsX.

The protein localises to the cell membrane. The enzyme catalyses an acyl phosphate + sn-glycerol 3-phosphate = a 1-acyl-sn-glycero-3-phosphate + phosphate. Its pathway is lipid metabolism; phospholipid metabolism. Catalyzes the transfer of an acyl group from acyl-phosphate (acyl-PO(4)) to glycerol-3-phosphate (G3P) to form lysophosphatidic acid (LPA). This enzyme utilizes acyl-phosphate as fatty acyl donor, but not acyl-CoA or acyl-ACP. This is Glycerol-3-phosphate acyltransferase from Exiguobacterium sibiricum (strain DSM 17290 / CCUG 55495 / CIP 109462 / JCM 13490 / 255-15).